We begin with the raw amino-acid sequence, 196 residues long: Ribosome maturation factor RimP (196 aa).

Residues Leu164–Glu196 are disordered. Over residues Gly173–Lys182 the composition is skewed to basic residues.

It belongs to the RimP family.

Its subcellular location is the cytoplasm. In terms of biological role, required for maturation of 30S ribosomal subunits. In Xanthomonas axonopodis pv. citri (strain 306), this protein is Ribosome maturation factor RimP.